We begin with the raw amino-acid sequence, 162 residues long: MAELIIVYFSSKSNNTHRFVQKLGLPAQRIPVDNRPLEVSTHYLLIVPTYAAGGSDAKGAVPKQVIRFLNNPNNRKHCKGVISSGNTNFGDTFALAGPIISQKLQVPLLHQFELLGTATDVKKVQAIFARLKHHTHDKQKQTNNLITERTHPCHKPMRHTSH.

It belongs to the NrdI family.

Its function is as follows. Probably involved in ribonucleotide reductase function. This Streptococcus pyogenes serotype M3 (strain ATCC BAA-595 / MGAS315) protein is Protein NrdI.